Reading from the N-terminus, the 1438-residue chain is MDLPPDSRTALRDWLTEQLADLLGEPLADVRALADDDDLLGCGLDSIRLMYLQERLRARGSTLDFAQLAQRPCLGAWLDLLACADRLSAPATVALPTAQDRDQPFELSSVQQAYWLGRGAGEVLGNVSCHAFLEFRTRDVDPQRLAAAAECVRQRHPMLRARFLDGRQQILPTPPLSCFDLQDWRTLQVDEAERDWQALRDWRAHECLAVERGQVFLLGLVRMPGGEDRLWLSLDLLAADVESLRLLLAELGVAYLAPERLAEPPALHFADYLAHRAAQRAEAAARARDYWLERLPRLPDAPALPLACAPESIRQPRTRRLAFQLSAGESRRLERLAAQHGVTLSSVFGCAFALVLARWSESAEFLLNVPLFDRHADDPRIGEVIADFTTLLLLECRMQAGVSFAEAVKSFQRNLHGAIDHAAFPALEVLREARRQGQPRSAPVVFASNLGEEGFVPAAFRDAFGDLHDMLSQTPQVWLDHQLYRVGDGILLAWDSVVGLFPEGLPETMFEAYVGLLQRLCDSAWGQPADLPLPWAQQARRALLNGQPACATARTLHRDFFLRAAEAPDADALLYRDQRVTRGELAERALRIAGGLREAGVRPGDAVEVSLPRGPQQVAAVFGVLAAGACYVPLDIDQPPARRRLIEEAAGVCLAITEEDDPQALPPRLDVQRLLRGPALAAPVPLAPQASAYVIYTSGSTGVPKGVEVSHAAAINTIDALLDLLRVNASDRLLAVSALDFDLSVFDLFGGLGAGASLVLPAQEQARDAAAWAEAIQRHAVSLWNSAPALLEMALSLPASQADYRSLRAVLLSGDWVALDLPGRLRPRCAEGCRLHVLGGATEAGIWSNLQSVDTVPPHWRSIPYGRPLPGQAYRVVDTHGRDVPDLVVGELWIGGASLARGYRNDPELSARRFVHDAQGRWYRTGDRGRYWGDGTLEFLGRVDQQVKVRGQRIELGEVEAALCAQAGVESACAAVLGGGVASLGAVLVPRLAPRAEGSMDLPAAQPFAGLAEAEAVLTREILGALLEAPLELDDGLRRRWLDWLADSAASALPSLDEALRRLGWQAAGLTAMGNALRGLLAGEQAPAALLLDPWLAPQAVAARLPDGREALARLLEALPTPAAGERLRVAVLDTRAGLWLDQGMASLLRPGLELTLFERSRVLLDAAATRLPERIVVQALDDGLLPAEHLGRYDRVISFAALHAYEASREGLALAAALLRPQGRLLLVDLLCESPLALLGAALLDDRPLRLAELPSLLADLAAAGLAPRCLWRSERIALVEALAPGLGLDAAALQAGLEQRLPQAMRPERLWCLPSLPLNGNGKVDRRRLAESMTRALGECRHEPSAEEPLEAHEQALAECWEAVLKRPVRRREASFFSLGGDSLLATRLLAGIRERFGVRLGMADFYRQPTLAGLARHLQVQTVEIEETQLEEGVL.

The Carrier 1 domain occupies 6–85 (DSRTALRDWL…AWLDLLACAD (80 aa)). O-(pantetheine 4'-phosphoryl)serine is present on serine 46. A condensation/cyclization region spans residues 136 to 442 (RTRDVDPQRL…ARRQGQPRSA (307 aa)). The interval 563–950 (RAAEAPDADA…GRVDQQVKVR (388 aa)) is adenylation. Positions 1350–1425 (EPLEAHEQAL…GLARHLQVQT (76 aa)) constitute a Carrier 2 domain. Serine 1385 is modified (O-(pantetheine 4'-phosphoryl)serine).

This sequence belongs to the NRP synthetase family. Pantetheine 4'-phosphate serves as cofactor.

It catalyses the reaction holo-[peptidyl-carrier protein] + L-cysteine + ATP = L-cysteinyl-[peptidyl-carrier protein] + AMP + diphosphate. It participates in siderophore biosynthesis. It functions in the pathway antifungal biosynthesis. In terms of biological role, involved in the biosynthesis of the siderophore pyochelin. Accepts salicylate activated by PchD at the first peptidyl carrier domain (ArCP), and activates and fixes one molecule of cysteine at the second peptidyl carrier domain (PCP1) via a thioester linkage to the phosphopanthetheine moiety. Then catalyzes the condensation reaction between the salicylate bound to the first site and the cysteine bound to the second site, and the cyclization of the cysteine to form the salicyl-thiazolinyl-S-PCP1 intermediate at the second site. When this intermediate is released by the action of a thioesterase, it produces the antifungal antibiotic dihydroaeruginoic acid (Dha or hydroxyphenyl-thiazolinyl-carboxylate). This chain is Pyochelin synthetase PchE, found in Pseudomonas aeruginosa (strain ATCC 15692 / DSM 22644 / CIP 104116 / JCM 14847 / LMG 12228 / 1C / PRS 101 / PAO1).